The sequence spans 647 residues: Probable cobalt/nickel-exporting P-type ATPase (647 aa).

Transmembrane regions (helical) follow at residues 33–53, 55–75, 94–114, 260–280, and 291–311; these read WAAA…LGAP, AVVW…PAWV, AAIG…IVIF, AGVV…GADL, and MIVA…LSAI. The 4-aspartylphosphate intermediate role is filled by D339. Mg(2+) is bound by residues D532 and D536. A helical membrane pass occupies residues 587–607; sequence VIANLVMAGAAITTLVLWDLF.

It belongs to the cation transport ATPase (P-type) (TC 3.A.3) family. Type IB subfamily.

It localises to the cell membrane. The catalysed reaction is Ni(2+)(out) + ATP + H2O = Ni(2+)(in) + ADP + phosphate + H(+). It carries out the reaction Co(2+)(out) + ATP + H2O = Co(2+)(in) + ADP + phosphate + H(+). In terms of biological role, involved in heavy metal homeostasis. Probably exports nickel and cobalt ions out of the cell. In Mycolicibacterium smegmatis (strain ATCC 700084 / mc(2)155) (Mycobacterium smegmatis), this protein is Probable cobalt/nickel-exporting P-type ATPase (ctpD).